The primary structure comprises 548 residues: Probable 5-epi-aristolochene synthase 4 (548 aa).

Positions 301, 305, 444, 448, and 452 each coordinate Mg(2+). The DDXXD motif motif lies at 301 to 305; it reads DDTFD.

This sequence belongs to the terpene synthase family. In terms of assembly, monomer. Requires Mg(2+) as cofactor.

It localises to the cytoplasm. The catalysed reaction is (2E,6E)-farnesyl diphosphate = (+)-5-epi-aristolochene + diphosphate. It participates in secondary metabolite biosynthesis; terpenoid biosynthesis. Functionally, catalyzes the cyclization of trans,trans-farnesyl diphosphate (FPP) to the bicyclic intermediate 5-epi-aristolochene, initial step in the conversion of FPP to the sesquiterpenoid antifungal phytoalexin capsidiol. Produces germacrene A as an enzyme-bound intermediate that is not released by the enzyme, but is further cyclized to produce the bicyclic 5-epi-aristolochene. This is Probable 5-epi-aristolochene synthase 4 from Nicotiana attenuata (Coyote tobacco).